Consider the following 181-residue polypeptide: Putative adenylate kinase (181 aa).

ATP-binding residues include glycine 10, glycine 12, lysine 13, serine 14, and threonine 15. The NMP stretch occupies residues 35 to 58; that stretch reads NITEVVSKNGLYLEKDIEMDSYVV. The segment at 106 to 116 is LID; sequence SRNYSSEKVKE. 2 residues coordinate ATP: arginine 107 and lysine 147.

The protein belongs to the adenylate kinase family. AK6 subfamily. In terms of assembly, interacts with uS11. Not a structural component of 40S pre-ribosomes, but transiently interacts with them by binding to uS11.

It carries out the reaction AMP + ATP = 2 ADP. It catalyses the reaction ATP + H2O = ADP + phosphate + H(+). In terms of biological role, broad-specificity nucleoside monophosphate (NMP) kinase that catalyzes the reversible transfer of the terminal phosphate group between nucleoside triphosphates and monophosphates. Also has ATPase activity. Involved in the late maturation steps of the 30S ribosomal particles, specifically 16S rRNA maturation. While NMP activity is not required for ribosome maturation, ATPase activity is. Associates transiently with small ribosomal subunit protein uS11. ATP hydrolysis breaks the interaction with uS11. May temporarily remove uS11 from the ribosome to enable a conformational change of the ribosomal RNA that is needed for the final maturation step of the small ribosomal subunit. The chain is Putative adenylate kinase from Methanococcus maripaludis (strain C7 / ATCC BAA-1331).